The following is a 473-amino-acid chain: UDP-N-acetylmuramate--L-alanine ligase (473 aa).

Residue 123-129 (GSHGKTS) coordinates ATP.

It belongs to the MurCDEF family.

The protein resides in the cytoplasm. It carries out the reaction UDP-N-acetyl-alpha-D-muramate + L-alanine + ATP = UDP-N-acetyl-alpha-D-muramoyl-L-alanine + ADP + phosphate + H(+). It participates in cell wall biogenesis; peptidoglycan biosynthesis. Its function is as follows. Cell wall formation. This chain is UDP-N-acetylmuramate--L-alanine ligase, found in Prochlorococcus marinus subsp. pastoris (strain CCMP1986 / NIES-2087 / MED4).